Here is a 494-residue protein sequence, read N- to C-terminus: Probable cytosol aminopeptidase (494 aa).

Lys-260 and Asp-265 together coordinate Mn(2+). Residue Lys-272 is part of the active site. The Mn(2+) site is built by Asp-283, Asp-342, and Glu-344. The active site involves Arg-346.

The protein belongs to the peptidase M17 family. The cofactor is Mn(2+).

The protein resides in the cytoplasm. The enzyme catalyses Release of an N-terminal amino acid, Xaa-|-Yaa-, in which Xaa is preferably Leu, but may be other amino acids including Pro although not Arg or Lys, and Yaa may be Pro. Amino acid amides and methyl esters are also readily hydrolyzed, but rates on arylamides are exceedingly low.. It catalyses the reaction Release of an N-terminal amino acid, preferentially leucine, but not glutamic or aspartic acids.. Its function is as follows. Presumably involved in the processing and regular turnover of intracellular proteins. Catalyzes the removal of unsubstituted N-terminal amino acids from various peptides. The sequence is that of Probable cytosol aminopeptidase from Bacillus cereus (strain ATCC 14579 / DSM 31 / CCUG 7414 / JCM 2152 / NBRC 15305 / NCIMB 9373 / NCTC 2599 / NRRL B-3711).